The following is a 347-amino-acid chain: MSNGSHSSVQLKSSTYLSKPTFHFAAGLLSGLTSSILLQPADLLKTRVQQSRETAALLPTIRSILASPHPIQGLWRGTLPSALRTGFGSALYFTSLNTLRTAVAADDPGYLFRGGHGSKPQNGNSPSGVSASSALPKLSHTANLITGAVARVAAGFVMMPVTVLKVRYESDYYAYRSLWGAAKDIVRHEGVRGLFAGFGATAIRDAPYAGLYVVFYEQSKRSLASLLGASSPSARSTPTEQQKSPPSTASINFISGALAAGLATTITNPFDVVKTRVQLMPSKYKNMMRATALMLREDGMRSLFGGLGLRMGRKALSSALAWTVYEELIMWAEKRWAEEQRDVKGVL.

Solcar repeat units lie at residues Ser-18–Ala-102, Leu-138–Ser-222, and Ser-247–Trp-331. 6 helical membrane-spanning segments follow: residues Phe-24 to Gln-49, Gly-77 to Val-103, Leu-144 to Glu-169, Gly-197 to Lys-220, Ile-251 to Val-277, and Gly-306 to Val-324.

It belongs to the mitochondrial carrier (TC 2.A.29) family. SLC25A38 subfamily.

The protein localises to the mitochondrion inner membrane. The enzyme catalyses glycine(in) = glycine(out). Its function is as follows. Mitochondrial glycine transporter that imports glycine into the mitochondrial matrix. Plays an important role in providing glycine for the first enzymatic step in heme biosynthesis, the condensation of glycine with succinyl-CoA to produce 5-aminolevulinate (ALA) in the mitochondrial matrix. In Coccidioides immitis (strain RS) (Valley fever fungus), this protein is Mitochondrial glycine transporter.